Consider the following 359-residue polypeptide: Serpentine receptor class epsilon-13 (359 aa).

Transmembrane regions (helical) follow at residues 33 to 53, 74 to 94, 111 to 131, 150 to 170, 180 to 200, 237 to 257, and 266 to 286; these read YLFVFYIQIALIFIVLFYYLL, AIYLPCVLGHVMCLIQKILLI, ISLFRAIFCFPGFYCLSAFVA, WLVGLILWIIYSIAFISALDF, VTIFILLSCLAYLSNYLNFLL, LALSIAFFQISGPMCLLIDNL, and LNTVVFDTILLLYAIVTPFVI.

It belongs to the nematode receptor-like protein sre family.

It localises to the membrane. The sequence is that of Serpentine receptor class epsilon-13 (sre-13) from Caenorhabditis elegans.